Reading from the N-terminus, the 238-residue chain is Ribonuclease 3 (238 aa).

The region spanning 4–130 is the RNase III domain; sequence IQTLFQTLNI…LFGAIYLDLG (127 aa). Residue glutamate 45 participates in Mg(2+) binding. Aspartate 49 is an active-site residue. Positions 116 and 119 each coordinate Mg(2+). Residue glutamate 119 is part of the active site. The 69-residue stretch at 154 to 222 folds into the DRBM domain; it reads DFKTQLQEIV…AQQALSKVAK (69 aa). Residues 215-238 form a disordered region; the sequence is QALSKVAKPKDLLNNKGGKEKELQ. Basic and acidic residues predominate over residues 222–238; sequence KPKDLLNNKGGKEKELQ.

Belongs to the ribonuclease III family. Homodimer. The cofactor is Mg(2+).

It localises to the cytoplasm. It catalyses the reaction Endonucleolytic cleavage to 5'-phosphomonoester.. Its function is as follows. Digests double-stranded RNA. Involved in the processing of primary rRNA transcript to yield the immediate precursors to the large and small rRNAs (23S and 16S). Processes some mRNAs, and tRNAs when they are encoded in the rRNA operon. Processes pre-crRNA and tracrRNA of type II CRISPR loci if present in the organism. The sequence is that of Ribonuclease 3 from Onion yellows phytoplasma (strain OY-M).